The following is a 275-amino-acid chain: Exosome complex component Rrp42 (275 aa).

This sequence belongs to the RNase PH family. Rrp42 subfamily. Component of the archaeal exosome complex. Forms a hexameric ring-like arrangement composed of 3 Rrp41-Rrp42 heterodimers. The hexameric ring associates with a trimer of Rrp4 and/or Csl4 subunits.

It is found in the cytoplasm. Its function is as follows. Non-catalytic component of the exosome, which is a complex involved in RNA degradation. Contributes to the structuring of the Rrp41 active site. The protein is Exosome complex component Rrp42 of Saccharolobus solfataricus (strain ATCC 35092 / DSM 1617 / JCM 11322 / P2) (Sulfolobus solfataricus).